Reading from the N-terminus, the 89-residue chain is Small ribosomal subunit protein uS15 (89 aa).

This sequence belongs to the universal ribosomal protein uS15 family. Part of the 30S ribosomal subunit. Forms a bridge to the 50S subunit in the 70S ribosome, contacting the 23S rRNA.

In terms of biological role, one of the primary rRNA binding proteins, it binds directly to 16S rRNA where it helps nucleate assembly of the platform of the 30S subunit by binding and bridging several RNA helices of the 16S rRNA. Forms an intersubunit bridge (bridge B4) with the 23S rRNA of the 50S subunit in the ribosome. This chain is Small ribosomal subunit protein uS15, found in Chromohalobacter salexigens (strain ATCC BAA-138 / DSM 3043 / CIP 106854 / NCIMB 13768 / 1H11).